The following is a 467-amino-acid chain: Neurexin-1-beta (467 aa).

The N-terminal stretch at 1–45 (MYQRMLRCGAELGSPGGGGGGAGGRLALLWIVPLTLSGLLGVAWG) is a signal peptide. Over 46–391 (ASSLGAHHIH…EVIRESSSTT (346 aa)) the chain is Extracellular. The Laminin G-like domain maps to 86 to 284 (YIFSKGGGQI…DANIAIVGNV (199 aa)). Positions 136 and 153 each coordinate Ca(2+). The N-linked (GlcNAc...) asparagine glycan is linked to Asn-183. The tract at residues 200-229 (GNNDNERLAIARQRIPYRLGRVVDEWLLDK) is essential for interaction with CBLN1; modulates interaction affinity with NLGN1, NLGN2 and NLGN3; prevents interaction with DAG1/alpha-dystroglycan; modulates interaction with alpha-latrotoxin. Residues Ile-235 and Asn-237 each contribute to the Ca(2+) site. The interval 318–380 (LATSTARRGN…AGGREPYPGS (63 aa)) is disordered. Positions 324–339 (RRGNSPTKEPVSQTTD) are enriched in polar residues. A glycan (O-linked (Xyl...) (heparan sulfate) serine) is linked at Ser-345. The chain crosses the membrane as a helical span at residues 392 to 412 (GMVVGIVAAAALCILILLYAM). The Cytoplasmic portion of the chain corresponds to 413-467 (YKYRNRDEGSYHVDESRNYISNSAQSNGAVVKEKQPSSAKSANKNKKNKDKEYYV). Residues 434-467 (NSAQSNGAVVKEKQPSSAKSANKNKKNKDKEYYV) are disordered. Phosphoserine is present on residues Ser-449, Ser-450, and Ser-453.

Belongs to the neurexin family. The cytoplasmic C-terminal region binds to CASK. Binds NLGN1, NLGN2 and NLGN3, DAG1 (alpha-dystroglycan) and alpha-latrotoxin. Binding to neuroligins is calcium-dependent, and the binding preference ranks as follow: NLGN1 &gt; NLGN4 &gt;&gt; NLGN3 &gt; NLGN2. Interacts with CBLN2 and more weakly with CBLN4. Interacts with CBLN1; interaction is CBLN1 hexamer form-dependent; CBLN1-binding is calcium-independent; isoform 1b does not interact with CBLN1. Interacts with CLSTN3. In terms of processing, O-glycosylated; contains heparan sulfate. Heparan sulfate attachment is required for synapse development by mediating interactions with neuroligins.

Its subcellular location is the presynaptic cell membrane. Neuronal cell surface protein involved in cell recognition and cell adhesion by forming intracellular junctions through binding to neuroligins. Plays a role in formation of synaptic junctions. Functions as part of a trans-synaptic complex by binding to cerebellins and postsynaptic GRID1. This interaction helps regulate the activity of NMDA and AMPA receptors at hippocampal synapses without affecting synapse formation. NRXN1B-CBLN2-GRID1 complex transduce presynaptic signals into postsynaptic NMDAR response. This is Neurexin-1-beta from Bos taurus (Bovine).